A 376-amino-acid chain; its full sequence is Cobalt-precorrin-5B C(1)-methyltransferase (376 aa).

The interval 353–376 (KGRTTSTPSHQPAPSSFGDRNRRT) is disordered. Polar residues predominate over residues 355-366 (RTTSTPSHQPAP).

It belongs to the CbiD family.

The catalysed reaction is Co-precorrin-5B + S-adenosyl-L-methionine = Co-precorrin-6A + S-adenosyl-L-homocysteine. It participates in cofactor biosynthesis; adenosylcobalamin biosynthesis; cob(II)yrinate a,c-diamide from sirohydrochlorin (anaerobic route): step 6/10. Functionally, catalyzes the methylation of C-1 in cobalt-precorrin-5B to form cobalt-precorrin-6A. The sequence is that of Cobalt-precorrin-5B C(1)-methyltransferase from Agrobacterium fabrum (strain C58 / ATCC 33970) (Agrobacterium tumefaciens (strain C58)).